The chain runs to 207 residues: dTTP/UTP pyrophosphatase (207 aa).

The active-site Proton acceptor is the Asp86.

The protein belongs to the Maf family. YhdE subfamily. Requires a divalent metal cation as cofactor.

Its subcellular location is the cytoplasm. It catalyses the reaction dTTP + H2O = dTMP + diphosphate + H(+). The catalysed reaction is UTP + H2O = UMP + diphosphate + H(+). Nucleoside triphosphate pyrophosphatase that hydrolyzes dTTP and UTP. May have a dual role in cell division arrest and in preventing the incorporation of modified nucleotides into cellular nucleic acids. In Nitrosospira multiformis (strain ATCC 25196 / NCIMB 11849 / C 71), this protein is dTTP/UTP pyrophosphatase.